An 82-amino-acid polypeptide reads, in one-letter code: UPF0153 protein VC_1057 (82 aa).

This sequence belongs to the UPF0153 family.

The protein is UPF0153 protein VC_1057 of Vibrio cholerae serotype O1 (strain ATCC 39315 / El Tor Inaba N16961).